Here is a 247-residue protein sequence, read N- to C-terminus: O-methyltransferase imqG (247 aa).

Residues Glu-84, Gly-86–Thr-87, and Ala-138 each bind S-adenosyl-L-methionine. Asp-163, Asp-189, and Asn-190 together coordinate a divalent metal cation. Asp-163 provides a ligand contact to substrate.

Belongs to the class I-like SAM-binding methyltransferase superfamily. Cation-dependent O-methyltransferase family. CCoAMT subfamily. Homodimer. A divalent metal cation is required as a cofactor.

It functions in the pathway secondary metabolite biosynthesis. Its function is as follows. O-methyltransferase; part of the gene cluster that mediates the biosynthesis of imizoquins A to D, tripeptide-derived alkaloids that serve a protective role against oxidative stress that are essential for normal germination. ImqB is a canonical three-module NRPS that assembles the tripeptide backbone of the imizoquins via condensation of Trp, Tyr, and Leu-derived precursors. N-methylation by imqF and phenol oxidation by imqC, followed by cyclization via the FAD-dependent oxidase imqH carry out the three-step transformation of L-tyrosine into tetrahydroisoquinoline. Importantly, this sequence requires the presence of a free amine in the tyrosine moiety, indicating that isoquinoline formation occurs prior to peptide bond formation. The imidazolidin-4-one ring of imizoquins could form following additional oxidation of the methyl-derived bridgehead carbon by imqH. Lastly, O-methylation by imqG and leucine hydroxylation by imqE complete biosynthesis of the imizoquins. The polypeptide is O-methyltransferase imqG (Aspergillus flavus (strain ATCC 200026 / FGSC A1120 / IAM 13836 / NRRL 3357 / JCM 12722 / SRRC 167)).